Consider the following 385-residue polypeptide: Glutamate 5-kinase (385 aa).

Lys-17 contacts ATP. Ser-64, Asp-151, and Asn-165 together coordinate substrate. Residue 185–186 coordinates ATP; it reads SD. A PUA domain is found at 291–367; sequence SGTVRVDAGA…DQIENVLGYS (77 aa).

It belongs to the glutamate 5-kinase family.

Its subcellular location is the cytoplasm. The enzyme catalyses L-glutamate + ATP = L-glutamyl 5-phosphate + ADP. It participates in amino-acid biosynthesis; L-proline biosynthesis; L-glutamate 5-semialdehyde from L-glutamate: step 1/2. Functionally, catalyzes the transfer of a phosphate group to glutamate to form L-glutamate 5-phosphate. In Methanosarcina mazei (strain ATCC BAA-159 / DSM 3647 / Goe1 / Go1 / JCM 11833 / OCM 88) (Methanosarcina frisia), this protein is Glutamate 5-kinase.